The chain runs to 274 residues: Diaminopimelate epimerase (274 aa).

Asn11, Gln44, and Asn64 together coordinate substrate. Cys73 acts as the Proton donor in catalysis. Substrate-binding positions include 74 to 75 (GN), Asn157, Asn190, and 208 to 209 (ER). Cys217 serves as the catalytic Proton acceptor. 218-219 (GS) provides a ligand contact to substrate.

It belongs to the diaminopimelate epimerase family. In terms of assembly, homodimer.

It localises to the cytoplasm. The catalysed reaction is (2S,6S)-2,6-diaminopimelate = meso-2,6-diaminopimelate. It participates in amino-acid biosynthesis; L-lysine biosynthesis via DAP pathway; DL-2,6-diaminopimelate from LL-2,6-diaminopimelate: step 1/1. Catalyzes the stereoinversion of LL-2,6-diaminopimelate (L,L-DAP) to meso-diaminopimelate (meso-DAP), a precursor of L-lysine and an essential component of the bacterial peptidoglycan. This is Diaminopimelate epimerase from Pasteurella multocida (strain Pm70).